A 144-amino-acid chain; its full sequence is Transcriptional regulator SlyA (144 aa).

One can recognise an HTH marR-type domain in the interval 2–135 (ESPLGSDLAR…LITLIAKLEH (134 aa)). The H-T-H motif DNA-binding region spans 49-72 (QIQLAKAIGIEQPSLVRTLDQLEE).

It belongs to the SlyA family. Homodimer.

In terms of biological role, transcription regulator that can specifically activate or repress expression of target genes. The protein is Transcriptional regulator SlyA of Escherichia coli (strain 55989 / EAEC).